The sequence spans 238 residues: 2,3-bisphosphoglycerate-dependent phosphoglycerate mutase (238 aa).

Substrate is bound by residues 8–15 (RHGQSEWN), 21–22 (TG), Arg60, 86–89 (ERHY), Lys97, 113–114 (RR), and 182–183 (GN). His9 acts as the Tele-phosphohistidine intermediate in catalysis. The active-site Proton donor/acceptor is Glu86.

Belongs to the phosphoglycerate mutase family. BPG-dependent PGAM subfamily. In terms of assembly, homodimer.

It catalyses the reaction (2R)-2-phosphoglycerate = (2R)-3-phosphoglycerate. It functions in the pathway carbohydrate degradation; glycolysis; pyruvate from D-glyceraldehyde 3-phosphate: step 3/5. Functionally, catalyzes the interconversion of 2-phosphoglycerate and 3-phosphoglycerate. The sequence is that of 2,3-bisphosphoglycerate-dependent phosphoglycerate mutase from Pelagibacter ubique (strain HTCC1062).